The chain runs to 445 residues: Signal recognition particle 54 kDa protein (445 aa).

GTP-binding positions include 106–113 (GLQGSGKT), 186–190 (DTAGR), and 244–247 (TKLD).

This sequence belongs to the GTP-binding SRP family. SRP54 subfamily. As to quaternary structure, part of the signal recognition particle protein translocation system, which is composed of SRP and FtsY. Archaeal SRP consists of a 7S RNA molecule of 300 nucleotides and two protein subunits: SRP54 and SRP19.

The protein resides in the cytoplasm. It catalyses the reaction GTP + H2O = GDP + phosphate + H(+). In terms of biological role, involved in targeting and insertion of nascent membrane proteins into the cytoplasmic membrane. Binds to the hydrophobic signal sequence of the ribosome-nascent chain (RNC) as it emerges from the ribosomes. The SRP-RNC complex is then targeted to the cytoplasmic membrane where it interacts with the SRP receptor FtsY. This Methanobrevibacter smithii (strain ATCC 35061 / DSM 861 / OCM 144 / PS) protein is Signal recognition particle 54 kDa protein.